The primary structure comprises 379 residues: Protein psi1 (379 aa).

One can recognise a J domain in the interval 1-70 (MVADTKLYDC…RKLYDQYGIT (70 aa)). Disordered regions lie at residues 69–95 (ITEGNAAPPPPGAEGGPGAGFGGFPGA) and 176–205 (FGGGGAGPHARRSHPSFGGSRPSQPPAQNE). The span at 81–95 (AEGGPGAGFGGFPGA) shows a compositional bias: gly residues.

Required for nuclear migration during mitosis. It is required for the normal initiation of translation. The protein is Protein psi1 (psi1) of Schizosaccharomyces pombe (strain 972 / ATCC 24843) (Fission yeast).